The following is a 3461-amino-acid chain: Reelin (3461 aa).

A signal peptide spans 1 to 26 (MERGCWAPRALVLAVLLLLATLRARA). The 165-residue stretch at 27–191 (ATGYYPRFSP…GAPTEATAYS (165 aa)) folds into the Reelin domain. An intrachain disulfide couples Cys-41 to Cys-127. An N-linked (GlcNAc...) asparagine glycan is attached at Asn-141. An intrachain disulfide couples Cys-155 to Cys-179. Asn-258, Asn-290, and Asn-306 each carry an N-linked (GlcNAc...) asparagine glycan. Residues Cys-540 and Cys-581 are joined by a disulfide bond. A BNR 1 repeat occupies 593-604 (EFSTNHGRSWSL). The cysteines at positions 609 and 614 are disulfide-linked. Residue Asn-629 is glycosylated (N-linked (GlcNAc...) asparagine). The EGF-like 1 domain occupies 671 to 702 (IGPSCLKFCSGRGQCTRHGCKCDPGFSGPACE). 2 cysteine pairs are disulfide-bonded: Cys-675–Cys-685 and Cys-692–Cys-701. The BNR 2 repeat unit spans residues 799-810 (HYSYDNGITWKL). Cys-895 and Cys-937 are disulfide-bonded. Residues 952–963 (EYSANHGLTWHL) form a BNR 3 repeat. 3 disulfides stabilise this stretch: Cys-968–Cys-975, Cys-1034–Cys-1044, and Cys-1051–Cys-1060. Residues 1030–1061 (IGQQCPNMCSGHGSCDHGVCRCDQGYQGTECH) form the EGF-like 2 domain. Residues 1157-1168 (QYSNNGGIQWHL) form a BNR 4 repeat. A glycan (N-linked (GlcNAc...) asparagine) is linked at Asn-1267. The BNR 5 repeat unit spans residues 1323 to 1334 (QYSHDAGMSWFL). 4 cysteine pairs are disulfide-bonded: Cys-1339–Cys-1348, Cys-1413–Cys-1423, Cys-1417–Cys-1428, and Cys-1430–Cys-1441. Residues 1409–1442 (ISEPCPSYCSGHGDCISGVCFCDLGYTAAQGTCV) enclose the EGF-like 3 domain. Asn-1447 carries N-linked (GlcNAc...) asparagine glycosylation. Cysteines 1475 and 1522 form a disulfide. One copy of the BNR 6 repeat lies at 1535–1546 (QYSNDNGILWHL). Residue Asn-1600 is glycosylated (N-linked (GlcNAc...) asparagine). Cys-1633 and Cys-1673 are disulfide-bonded. The stretch at 1686 to 1697 (QYSLNNGKDWQL) is one BNR 7 repeat. A disulfide bridge links Cys-1702 with Cys-1709. Asn-1750 is a glycosylation site (N-linked (GlcNAc...) asparagine). The EGF-like 4 domain occupies 1765-1796 (LASGCPWMCSGRGICDSGRCVCDRGFGGPFCV). The stretch at 1884–1895 (QFSVSGGVTWHL) is one BNR 8 repeat. Asn-1921 carries an N-linked (GlcNAc...) asparagine glycan. Residues Cys-1983 and Cys-2030 are joined by a disulfide bond. One copy of the BNR 9 repeat lies at 2043-2054 (EFSRDFGATWHL). A disulfide bridge connects residues Cys-2059 and Cys-2070. His-2061 and His-2074 together coordinate Zn(2+). The 33-residue stretch at 2129–2161 (IGPQCEEMCYGHGSCINGTKCICDPGYSGPTCK) folds into the EGF-like 5 domain. 3 disulfides stabilise this stretch: Cys-2133-Cys-2143, Cys-2137-Cys-2149, and Cys-2151-Cys-2160. The N-linked (GlcNAc...) asparagine glycan is linked to Asn-2145. Glu-2179 is a binding site for Zn(2+). A disulfide bridge links Cys-2195 with Cys-2235. The BNR 10 repeat unit spans residues 2250–2261 (QYSLNGGLSWSL). Glu-2264 contributes to the Zn(2+) binding site. N-linked (GlcNAc...) asparagine glycans are attached at residues Asn-2269 and Asn-2317. 6 disulfides stabilise this stretch: Cys-2348–Cys-2387, Cys-2393–Cys-2559, Cys-2482–Cys-2492, Cys-2486–Cys-2497, Cys-2499–Cys-2508, and Cys-2544–Cys-2584. Zn(2+) is bound by residues Glu-2397, Glu-2399, and His-2460. A BNR 11 repeat occupies 2399-2410 (EYSVDLGLSWHP). One can recognise an EGF-like 6 domain in the interval 2478 to 2509 (IGDGCLDMCSGHGRCVQGSCVCDEQWGGLYCD). The N-linked (GlcNAc...) asparagine glycan is linked to Asn-2569. 2 BNR repeats span residues 2598–2609 (EYSVNGGITWNL) and 2778–2789 (QFSTDFGVSWSY). Residues Cys-2794 and Cys-2801 are joined by a disulfide bond. One can recognise an EGF-like 7 domain in the interval 2853–2884 (LGPGCLDNCGGHGDCLKEQCICDPGYSGPNCY). Cys-2919 and Cys-2966 are joined by a disulfide. A glycan (N-linked (GlcNAc...) asparagine) is linked at Asn-2962. One copy of the BNR 14 repeat lies at 2979-2990 (DFSTDGGITWTL). N-linked (GlcNAc...) asparagine glycans are attached at residues Asn-3016 and Asn-3073. Residues 3143-3155 (EYTKDARSDSWQL) form a BNR 15 repeat. Cys-3160 and Cys-3170 are oxidised to a cystine. An N-linked (GlcNAc...) asparagine glycan is attached at Asn-3185. An EGF-like 8 domain is found at 3228–3260 (IGEACPKLCSGHGYCTTGAVCICDESFQGDDCS). 4 disulfide bridges follow: Cys-3232–Cys-3242, Cys-3236–Cys-3248, Cys-3250–Cys-3259, and Cys-3296–Cys-3346. The BNR 16 repeat unit spans residues 3363–3374 (QYSVNNGITWHV). Asn-3412 and Asn-3439 each carry an N-linked (GlcNAc...) asparagine glycan.

Belongs to the reelin family. Oligomer of disulfide-linked homodimers. Post-translationally, N-glycosylated and to a lesser extent also O-glycosylated. The major isoform 1 is neuron-specific. It is abundantly produced during brain ontogenesis by the Cajal-Retzius cells and other pioneer neurons located in the telencephalic marginal zone and by granule cells of the external granular layer of the cerebellum. Expression is located in deeper layers in the developing hippocampus and olfactory bulb, low levels of expression are also detected in the immature striatum. At early developmental stages, expressed also in hypothalamic differentiation fields, tectum and spinal cord. A moderate to low level of expression occurs in the septal area, striatal fields, habenular nuclei, some thalamic nuclei, particularly the lateral geniculate, the retina and some nuclei of the reticular formation in the central field of the medulla. Very low levels found in liver and kidney. No expression in radial glial cells, cortical plate, Purkinje cells and inferior olivary neurons. The minor isoform 2 is only expressed in non neuronal cells. The minor isoform 3 is found in the same cells as isoform 1, but is almost undetectable in retina and brain stem.

Its subcellular location is the secreted. It is found in the extracellular space. The protein localises to the extracellular matrix. Its function is as follows. Extracellular matrix serine protease secreted by pioneer neurons that plays a role in layering of neurons in the cerebral cortex and cerebellum by coordinating cell positioning during neurodevelopment. Regulates microtubule function in neurons and neuronal migration. Binding to the extracellular domains of lipoprotein receptors VLDLR and LRP8/APOER2 induces tyrosine phosphorylation of DAB1 and modulation of TAU phosphorylation. Affects migration of sympathetic preganglionic neurons in the spinal cord, where it seems to act as a barrier to neuronal migration. Enzymatic activity is important for the modulation of cell adhesion. This is Reelin (Reln) from Mus musculus (Mouse).